The sequence spans 3122 residues: Abnormal spindle-like microcephaly-associated protein homolog (3122 aa).

Disordered regions lie at residues 1–26 (MATM…AGDP) and 139–169 (KRSL…NESF). A compositionally biased stretch (basic and acidic residues) spans 10–21 (PEERGRRARPDP). Residues 289 to 388 (STQTQIHFLS…KDSMGHVGQQ (100 aa)) form a sufficient for interaction with KATNA1:KATNB1 region. Residues S348, S373, and S573 each carry the phosphoserine modification. The disordered stretch occupies residues 579–600 (PSTVARTTKKEGHTSKRISSLE). One can recognise a Calponin-homology (CH) 1 domain in the interval 888 to 1024 (KASKELLLAF…LLWKIALAFQ (137 aa)). Residues 1025 to 1045 (VDISLNLDQLKEEIDFLKHTH) adopt a coiled-coil conformation. S1071 carries the post-translational modification Phosphoserine. One can recognise a Calponin-homology (CH) 2 domain in the interval 1078 to 1229 (GDSVQLLMDW…YLSFLCARLL (152 aa)). IQ domains are found at residues 1234–1263 (EIRA…RDKA), 1315–1346 (QNKS…VILQ), 1410–1439 (QTKA…VVIQ), 1504–1535 (KRAA…CVLQ), 1550–1579 (LKKM…AAIT), 1600–1629 (TRSS…SVIK), 1623–1652 (ALAS…ATIK), 1696–1725 (VRES…AAIS), 1719–1750 (QCKA…LVIQ), 1769–1798 (VKRA…AAVT), 1792–1821 (QSTA…SAVK), 1842–1871 (TREA…AAVK), 1865–1896 (QHEA…AVIQ), 1915–1946 (LRHA…ALIQ), 1938–1967 (QHQC…AALQ), 1988–2017 (TKAA…AAVT), 2011–2042 (CHKA…IVIQ), 2061–2092 (LRRA…TLIE), 2134–2165 (TLKA…TLIQ), 2157–2188 (MHFA…TMVQ), 2207–2238 (LRRS…TLIQ), 2230–2261 (MHLA…IWIQ), 2279–2310 (LEKA…TVIQ), 2302–2333 (MHRA…VVIQ), 2343–2374 (QKHA…TLIQ), 2366–2397 (MHSS…IFVQ), 2416–2447 (LRKA…ALIQ), 2491–2522 (QHSA…KVIQ), 2602–2633 (KVEA…NIIE), 2674–2705 (RHRA…LIIQ), 2724–2755 (LKKS…RLFH), and 2849–2880 (ITSC…IRRS).

Interacts with KATNA1 and KATNB1; katanin complex formation KATNA1:KATNB1 is required for the association. In terms of tissue distribution, expressed in fetal brain, peripheral nervous system, liver and spleen. In the adult, expressed exclusively in testis, ovary and spleen.

The protein resides in the cytoplasm. It localises to the cytoskeleton. It is found in the spindle. The protein localises to the nucleus. Its function is as follows. Involved in mitotic spindle regulation and coordination of mitotic processes. The function in regulating microtubule dynamics at spindle poles including spindle orientation, astral microtubule density and poleward microtubule flux seem to depend on its association with the katanin complex formed by KATNA1 and KATNB1. Enhances the microtubule lattice severing activity of KATNA1 by recruiting the katanin complex to microtubules. Can block microtubule minus-end growth and reversely this function can be enhanced by the katanin complex. May have a preferential role in regulating neurogenesis. In Mus musculus (Mouse), this protein is Abnormal spindle-like microcephaly-associated protein homolog (Aspm).